The chain runs to 141 residues: Bombinins BLP-7/H-BO (141 aa).

The N-terminal stretch at 1-18 (MNFKYIIAVSFLIASTYA) is a signal peptide. The propeptide occupies 19-43 (RSVKNDEQSLSQRDVLDEESLREIR). Asn-70 carries the post-translational modification Asparagine amide. A propeptide spanning residues 74–123 (TAEEHEVMKRLEAVMRDLDSLDHPEEASEKETRGFNQEEIANLFTKKEKR) is cleaved from the precursor. Leu-140 is modified (leucine amide).

Belongs to the bombinin family. In terms of tissue distribution, expressed by the skin glands.

It is found in the secreted. Functionally, antimicrobial peptide with activity against Gram-positive and -negative bacteria and fungi. Shows activity against P.acnes (MIC=5 uM), E.coli (MIC=5-6.3 uM), S.aureus (MIC=5-6.3 uM), M.luteus, S.cerevisiae and C.albicans (MIC=10-12.5 uM). Also reduces the production of interleukin (IL)-8 and granulocyte-macrophage colony stimulating factor (CSF2) in normal human epidermal keratinocytes (NHEKs). Shows anticancer activity against three human hepatoma cell lines. In vivo, using the rat ear edema model, suppress P.acnes-induced skin inflammation, significantly reducing the ear thickness. Shows weak hemolytic activity against human erythrocytes. In terms of biological role, shows weak antimicrobial activity (tested on E.coli, S.aureus and C.albicans). Shows high hemolytic activity against human erythrocytes (38% erythrocyte lysis at 80.0 uM, and up to 85% at 159.7 uM). This is Bombinins BLP-7/H-BO from Bombina orientalis (Oriental fire-bellied toad).